We begin with the raw amino-acid sequence, 363 residues long: Small ribosomal subunit biogenesis GTPase RsgA (363 aa).

The CP-type G domain maps to 112 to 268; the sequence is HQQVIAANID…LIDTPGMREL (157 aa). Residues 157–160 and 210–218 contribute to the GTP site; these read TKAD and GSSGAGKST. Zn(2+) contacts are provided by Cys291, Cys296, His298, and Cys304. A disordered region spans residues 340–363; it reads RVAQNNRGKGSGKRPASVDRPGRR.

Belongs to the TRAFAC class YlqF/YawG GTPase family. RsgA subfamily. In terms of assembly, monomer. Associates with 30S ribosomal subunit, binds 16S rRNA. Requires Zn(2+) as cofactor.

It is found in the cytoplasm. Its function is as follows. One of several proteins that assist in the late maturation steps of the functional core of the 30S ribosomal subunit. Helps release RbfA from mature subunits. May play a role in the assembly of ribosomal proteins into the subunit. Circularly permuted GTPase that catalyzes slow GTP hydrolysis, GTPase activity is stimulated by the 30S ribosomal subunit. The polypeptide is Small ribosomal subunit biogenesis GTPase RsgA (Xanthomonas campestris pv. campestris (strain 8004)).